We begin with the raw amino-acid sequence, 593 residues long: Aspartate--tRNA(Asp/Asn) ligase (593 aa).

E182 provides a ligand contact to L-aspartate. The segment at 206-209 (QLFK) is aspartate. R228 lines the L-aspartate pocket. Residues 228-230 (RDE) and Q237 contribute to the ATP site. H455 contributes to the L-aspartate binding site. E489 contacts ATP. R496 serves as a coordination point for L-aspartate. 541–544 (GLDR) lines the ATP pocket.

The protein belongs to the class-II aminoacyl-tRNA synthetase family. Type 1 subfamily. As to quaternary structure, homodimer.

It localises to the cytoplasm. It carries out the reaction tRNA(Asx) + L-aspartate + ATP = L-aspartyl-tRNA(Asx) + AMP + diphosphate. Functionally, aspartyl-tRNA synthetase with relaxed tRNA specificity since it is able to aspartylate not only its cognate tRNA(Asp) but also tRNA(Asn). Reaction proceeds in two steps: L-aspartate is first activated by ATP to form Asp-AMP and then transferred to the acceptor end of tRNA(Asp/Asn). The protein is Aspartate--tRNA(Asp/Asn) ligase of Geotalea uraniireducens (strain Rf4) (Geobacter uraniireducens).